The primary structure comprises 353 residues: Probable cytochrome c oxidase subunit 2 (353 aa).

Positions 1-42 are cleaved as a signal peptide; the sequence is MTARELVCSQRVGQGLSRRLRPLVLAVTLGVLVVTLSGCSWS. Transmembrane regions (helical) follow at residues 63–83 and 110–130; these read LWIGAVVASLVVGVIVWGLIF and LVLTVTPFLIISMLFYFTVIV. The Cu cation site is built by H246, C287, C291, and H295.

It belongs to the cytochrome c oxidase subunit 2 family. Cu cation serves as cofactor. The cofactor is heme.

The protein localises to the cell membrane. It catalyses the reaction 4 Fe(II)-[cytochrome c] + O2 + 8 H(+)(in) = 4 Fe(III)-[cytochrome c] + 2 H2O + 4 H(+)(out). Its function is as follows. Subunits I and II form the functional core of the enzyme complex. Electrons originating in cytochrome c are transferred via heme a and Cu(A) to the binuclear center formed by heme a3 and Cu(B). The polypeptide is Probable cytochrome c oxidase subunit 2 (ctaC) (Mycobacterium leprae (strain TN)).